Reading from the N-terminus, the 138-residue chain is Holo-[acyl-carrier-protein] synthase (138 aa).

Mg(2+)-binding residues include D8 and E56.

This sequence belongs to the P-Pant transferase superfamily. AcpS family. Mg(2+) is required as a cofactor.

Its subcellular location is the cytoplasm. It catalyses the reaction apo-[ACP] + CoA = holo-[ACP] + adenosine 3',5'-bisphosphate + H(+). Transfers the 4'-phosphopantetheine moiety from coenzyme A to a Ser of acyl-carrier-protein. This is Holo-[acyl-carrier-protein] synthase from Thermoanaerobacter pseudethanolicus (strain ATCC 33223 / 39E) (Clostridium thermohydrosulfuricum).